Consider the following 220-residue polypeptide: Probable septum site-determining protein MinC (220 aa).

It belongs to the MinC family. As to quaternary structure, interacts with MinD and FtsZ.

Cell division inhibitor that blocks the formation of polar Z ring septums. Rapidly oscillates between the poles of the cell to destabilize FtsZ filaments that have formed before they mature into polar Z rings. Prevents FtsZ polymerization. This is Probable septum site-determining protein MinC from Vibrio vulnificus (strain CMCP6).